We begin with the raw amino-acid sequence, 161 residues long: uncharacterized protein (161 aa).

The helical transmembrane segment at 16–36 (KLGLVVAIFFFMMGTTVVVLY) threads the bilayer.

Its subcellular location is the membrane. This is an uncharacterized protein from Encephalitozoon cuniculi (strain GB-M1) (Microsporidian parasite).